A 140-amino-acid polypeptide reads, in one-letter code: Protein ripply1 (140 aa).

The short motif at 28–31 is the WRPW motif; required for gro2-binding element; the sequence is WRPW. The tract at residues 71–106 is ripply homology domain; that stretch reads HPVRLYWPRSKSFDYLFSDGEALLRNFPVQATINFY. The tract at residues 107–126 is disordered; that stretch reads DESDSEDEEESCDEDDESDV.

The protein belongs to the ripply family. As to quaternary structure, interacts with gro2 via the WRPW motif. In terms of tissue distribution, expressed in the embryonic anterior presomitic mesoderm and in newly formed somites.

It is found in the nucleus. Its function is as follows. Plays a role in somitogenesis. Essential for transcriptional repression of the segmental patterning genes, thus terminating the segmentation program in the presomitic mesoderm, and also required for the maintenance of rostrocaudal polarity in somites. The protein is Protein ripply1 of Danio rerio (Zebrafish).